A 139-amino-acid polypeptide reads, in one-letter code: Thioredoxin H-type (139 aa).

The region spanning 20–132 (ELAGGNVHLI…LHKKITAILD (113 aa)) is the Thioredoxin domain. Catalysis depends on nucleophile residues cysteine 58 and cysteine 61. The cysteines at positions 58 and 61 are disulfide-linked.

The protein resides in the cytoplasm. Participates in various redox reactions through the reversible oxidation of the active center dithiol to a disulfide. The H form is known to activate a number of cytosolic enzymes. The chain is Thioredoxin H-type from Populus jackii (Balm of Gilead).